A 70-amino-acid chain; its full sequence is DNA gyrase inhibitor YacG (70 aa).

Zn(2+) contacts are provided by Cys9, Cys12, Cys28, and Cys32. The disordered stretch occupies residues 43–70; that stretch reads ESRKIPGSSIDPESIVTSNNKQDNVDEQ.

This sequence belongs to the DNA gyrase inhibitor YacG family. In terms of assembly, interacts with GyrB. Zn(2+) serves as cofactor.

Inhibits all the catalytic activities of DNA gyrase by preventing its interaction with DNA. Acts by binding directly to the C-terminal domain of GyrB, which probably disrupts DNA binding by the gyrase. This is DNA gyrase inhibitor YacG from Legionella pneumophila (strain Lens).